The primary structure comprises 1189 residues: Disabled homolog 2-interacting protein (1189 aa).

Residues 1–75 are disordered; sequence MSAGGNARKS…EPSASTPFRV (75 aa). Over residues 20–38 the composition is skewed to basic residues; the sequence is LLRRPRLQRQRSRSRSRTR. Over residues 39–49 the composition is skewed to basic and acidic residues; sequence PARESPQERPG. The span at 59–73 shows a compositional bias: polar residues; it reads SEKNPSMEPSASTPF. The region spanning 101-202 is the PH domain; sequence SFRHILPGFR…WMENLRRAVH (102 aa). In terms of domain architecture, C2 spans 193–311; sequence WMENLRRAVH…AGRQFVEKWY (119 aa). Residues 387 to 595 enclose the Ras-GAP domain; sequence GKVKDFLTDL…TNMQRFLLEI (209 aa). The segment at 646–943 is necessary for interaction with AKT1; sequence LRDVHTALST…RTPPTLLSTL (298 aa). The span at 653–668 shows a compositional bias: polar residues; it reads LSTPGSGQLPGTNDLA. Disordered regions lie at residues 653–679 and 715–738; these read LSTP…SSVS and RSSG…PDLQ. Low complexity predominate over residues 669 to 679; it reads STPGSGSSSVS. Over residues 715-731 the composition is skewed to polar residues; that stretch reads RSSGVQPSPARSSSYSE. Serine 728 carries the phosphoserine; by MAP3K5 and RIPK1 modification. Serine 747 carries the post-translational modification Phosphoserine. Disordered stretches follow at residues 804-823, 843-865, 895-998, 1015-1034, and 1163-1189; these read VPTP…PQLL, PRGL…NSEE, SLTE…SPNA, EDEG…SKEE, and ARNG…SSNC. Low complexity predominate over residues 852-865; it reads EGHSSLSSHSNSEE. Pro residues predominate over residues 919-931; sequence QPPPPPPPPPPAP. Composition is skewed to polar residues over residues 939–955 and 967–976; these read LLST…TLAS and LRQQSSSSKG. Residues serine 978 and serine 995 each carry the phosphoserine modification. Basic and acidic residues predominate over residues 1023–1034; sequence PPHRDRLRSKEE. Residues 1025-1159 are a coiled coil; the sequence is HRDRLRSKEE…SALTQLKERY (135 aa).

In terms of assembly, on plasma membrane, exists in an inactive form complexed with TNFR1; in response to TNF-alpha, dissociates from TNFR1 complex, translocates to cytoplasm and forms part of an intracellular signaling complex comprising TRADD, RIPK1, TRAF2 and MAP3K5. Interacts with DAB1. Part of a cytoplasmic complex made of HIPK1, DAB2IP and MAP3K5 in response to TNF-alpha; this complex formation promotes MAP3K5-JNK activation and subsequent apoptosis. Interacts (via N-terminal domain) with JAK2; the interaction occurs in a IFNG/IFN-gamma-dependent manner and inhibits JAK2 autophosphorylation activity. Interacts (via C2 domain) with GSK3B; the interaction stimulates GSK3B kinase activation. Interacts (via C2 domain) with PPP2CA. Interacts (via proline-rich motif) with a regulatory p85 subunit (via SH3 domain) of the PI3K complex; the interaction inhibits the PI3K-AKT complex activity in a TNF-alpha-dependent manner in prostate cancer (PCa) cells. Interacts with AKT1; the interaction is increased in a TNF-alpha-induced manner. Interacts (via C2 domain and active form preferentially) with KDR/VEGFR2 (tyrosine-phosphorylated active form preferentially); the interaction occurs at the late phase of VEGFA response and inhibits KDR/VEGFR2 activity. Interacts (via N-terminus C2 domain) with MAP3K5 ('Ser-966' dephosphorylated form preferentially); the interaction occurs in a TNF-alpha-induced manner. Interacts (via Ras-GAP domain) with the catalytic subunit of protein phosphatase PP2A; the interaction occurs in resting endothelial cells, is further enhanced by TNF-alpha stimulation and is required to bridge PP2A to MAP3K5. Interacts (via C-terminus PER domain) with TRAF2 (via zinc fingers); the interaction occurs in a TNF-alpha-dependent manner. Interacts with 14-3-3 proteins; the interaction occurs in a TNF-alpha-dependent manner. Interacts (via Ras-GAP domain) with RIPK1 (via kinase domain); the interaction occurs in a TNF-alpha-dependent manner. Interacts (via PH domain) with ERN1. Interacts with TRAF2. Interacts (via NPXY motif) with DAB2 (via PID domain). Interacts with RAB40C; acts as a GAP for RAB40C. In response to TNF-alpha-induction, phosphorylated at Ser-728; phosphorylation leads to a conformational change, and thus, increases its association with 14-3-3 proteins, MAP3K5, RIPK1 and TRAF2 in endothelial cells; also stimulates regulatory p85 subunit sequestring and PI3K-p85 complex activity inhibition. Expressed in vascular endothelium of muscle and aorta, in smooth muscle cells of aorta and epithelial cells of lung. Expressed throughout the brain, including olfactory bulb, hypothalamus, cerebellum and cerebral cortex. Expressed in the soma and processes of neurons in a variety of brain structures, including the developing cerebral cortex, CA1 pyramidal neurons and Purkinje cells. Poorly expressed in medulloblastoma cells compared to cerebellar precursor proliferating progenitor cells (at protein level). Highly expressed in the brain, salivary gland, and testis; moderate expression in kidney and heart. Low expression in the lung, seminal vesicle, ventral prostate, epididymis, liver, and bladder. Very low expression in the coagulation gland and skeleton muscles. Lowest expression seen in spleen.

Its subcellular location is the cytoplasm. The protein resides in the cell membrane. It is found in the membrane. It localises to the cell projection. The protein localises to the dendrite. Its function is as follows. Functions as a scaffold protein implicated in the regulation of a large spectrum of both general and specialized signaling pathways. Involved in several processes such as innate immune response, inflammation and cell growth inhibition, apoptosis, cell survival, angiogenesis, cell migration and maturation. Also plays a role in cell cycle checkpoint control; reduces G1 phase cyclin levels resulting in G0/G1 cell cycle arrest. Mediates signal transduction by receptor-mediated inflammatory signals, such as the tumor necrosis factor (TNF), interferon (IFN) or lipopolysaccharide (LPS). Modulates the balance between phosphatidylinositol 3-kinase (PI3K)-AKT-mediated cell survival and apoptosis stimulated kinase (MAP3K5)-JNK signaling pathways; sequesters both AKT1 and MAP3K5 and counterbalances the activity of each kinase by modulating their phosphorylation status in response to pro-inflammatory stimuli. Acts as a regulator of the endoplasmic reticulum (ER) unfolded protein response (UPR) pathway; specifically involved in transduction of the ER stress-response to the JNK cascade through ERN1. Mediates TNF-alpha-induced apoptosis activation by facilitating dissociation of inhibitor 14-3-3 from MAP3K5; recruits the PP2A phosphatase complex which dephosphorylates MAP3K5 on 'Ser-966', leading to the dissociation of 13-3-3 proteins and activation of the MAP3K5-JNK signaling pathway in endothelial cells. Also mediates TNF/TRAF2-induced MAP3K5-JNK activation, while it inhibits CHUK-NF-kappa-B signaling. Acts a negative regulator in the IFN-gamma-mediated JAK-STAT signaling cascade by inhibiting smooth muscle cell (VSMCs) proliferation and intimal expansion, and thus, prevents graft arteriosclerosis (GA). Acts as a GTPase-activating protein (GAP) for the ADP ribosylation factor 6 (ARF6) and Ras. Promotes hydrolysis of the ARF6-bound GTP and thus, negatively regulates phosphatidylinositol 4,5-bisphosphate (PIP2)-dependent TLR4-TIRAP-MyD88 and NF-kappa-B signaling pathways in endothelial cells in response to lipopolysaccharides (LPS). Binds specifically to phosphatidylinositol 4-phosphate (PtdIns4P) and phosphatidylinositol 3-phosphate (PtdIns3P). In response to vascular endothelial growth factor (VEGFA), acts as a negative regulator of the VEGFR2-PI3K-mediated angiogenic signaling pathway by inhibiting endothelial cell migration and tube formation. In the developing brain, promotes both the transition from the multipolar to the bipolar stage and the radial migration of cortical neurons from the ventricular zone toward the superficial layer of the neocortex in a glial-dependent locomotion process. Probable downstream effector of the Reelin signaling pathway; promotes Purkinje cell (PC) dendrites development and formation of cerebellar synapses. Also functions as a tumor suppressor protein in prostate cancer progression; prevents cell proliferation and epithelial-to-mesenchymal transition (EMT) through activation of the glycogen synthase kinase-3 beta (GSK3B)-induced beta-catenin and inhibition of PI3K-AKT and Ras-MAPK survival downstream signaling cascades, respectively. In Mus musculus (Mouse), this protein is Disabled homolog 2-interacting protein (Dab2ip).